A 393-amino-acid chain; its full sequence is NAD(P)H-quinone oxidoreductase subunit H, chloroplastic (393 aa).

This sequence belongs to the complex I 49 kDa subunit family. As to quaternary structure, NDH is composed of at least 16 different subunits, 5 of which are encoded in the nucleus.

It localises to the plastid. Its subcellular location is the chloroplast thylakoid membrane. The enzyme catalyses a plastoquinone + NADH + (n+1) H(+)(in) = a plastoquinol + NAD(+) + n H(+)(out). It carries out the reaction a plastoquinone + NADPH + (n+1) H(+)(in) = a plastoquinol + NADP(+) + n H(+)(out). Its function is as follows. NDH shuttles electrons from NAD(P)H:plastoquinone, via FMN and iron-sulfur (Fe-S) centers, to quinones in the photosynthetic chain and possibly in a chloroplast respiratory chain. The immediate electron acceptor for the enzyme in this species is believed to be plastoquinone. Couples the redox reaction to proton translocation, and thus conserves the redox energy in a proton gradient. This chain is NAD(P)H-quinone oxidoreductase subunit H, chloroplastic, found in Lotus japonicus (Lotus corniculatus var. japonicus).